A 762-amino-acid polypeptide reads, in one-letter code: 5-methyltetrahydropteroyltriglutamate--homocysteine methyltransferase (762 aa).

5-methyltetrahydropteroyltri-L-glutamate is bound by residues 18–21 (REWK) and Lys-112. L-homocysteine-binding positions include 435–437 (IGS) and Glu-488. L-methionine-binding positions include 435 to 437 (IGS) and Glu-488. Residues 519–520 (RC) and Trp-565 contribute to the 5-methyltetrahydropteroyltri-L-glutamate site. Asp-603 serves as a coordination point for L-homocysteine. Residue Asp-603 participates in L-methionine binding. Residue Glu-609 participates in 5-methyltetrahydropteroyltri-L-glutamate binding. His-645, Cys-647, and Glu-669 together coordinate Zn(2+). Residue His-698 is the Proton donor of the active site. A Zn(2+)-binding site is contributed by Cys-730.

It belongs to the vitamin-B12 independent methionine synthase family. Requires Zn(2+) as cofactor.

It carries out the reaction 5-methyltetrahydropteroyltri-L-glutamate + L-homocysteine = tetrahydropteroyltri-L-glutamate + L-methionine. It functions in the pathway amino-acid biosynthesis; L-methionine biosynthesis via de novo pathway; L-methionine from L-homocysteine (MetE route): step 1/1. In terms of biological role, catalyzes the transfer of a methyl group from 5-methyltetrahydrofolate to homocysteine resulting in methionine formation. The protein is 5-methyltetrahydropteroyltriglutamate--homocysteine methyltransferase of Bacillus velezensis (strain DSM 23117 / BGSC 10A6 / LMG 26770 / FZB42) (Bacillus amyloliquefaciens subsp. plantarum).